The following is a 151-amino-acid chain: 3-hydroxyacyl-[acyl-carrier-protein] dehydratase FabZ (151 aa).

The active site involves His54.

It belongs to the thioester dehydratase family. FabZ subfamily.

The protein localises to the cytoplasm. It carries out the reaction a (3R)-hydroxyacyl-[ACP] = a (2E)-enoyl-[ACP] + H2O. Functionally, involved in unsaturated fatty acids biosynthesis. Catalyzes the dehydration of short chain beta-hydroxyacyl-ACPs and long chain saturated and unsaturated beta-hydroxyacyl-ACPs. In Erwinia tasmaniensis (strain DSM 17950 / CFBP 7177 / CIP 109463 / NCPPB 4357 / Et1/99), this protein is 3-hydroxyacyl-[acyl-carrier-protein] dehydratase FabZ.